Consider the following 397-residue polypeptide: N(6)-adenosine-methyltransferase non-catalytic subunit METTL14 (397 aa).

Disordered stretches follow at residues 37 to 67 and 368 to 397; these read NAED…KKTP and ELLR…GRPR. A compositionally biased stretch (polar residues) spans 40–51; it reads DINSSRQLNSGG. Over residues 382-397 the composition is skewed to basic residues; sequence LRGRGRGFPRGRGRPR.

Belongs to the MT-A70-like family. As to quaternary structure, component of the WMM complex, a N6-methyltransferase complex composed of a catalytic subcomplex, named MAC, and of an associated subcomplex, named MACOM. The MAC subcomplex is composed of Ime4/Mettl3 and Mettl14. The MACOM subcomplex is composed of fl(2)d, Flacc/Xio, Hakai, vir, and, in some cases of nito.

The protein localises to the nucleus. Its function is as follows. Non-catalytic component of the WMM complex, a complex that mediates N6-methyladenosine (m6A) methylation of mRNAs, a modification that plays a role in the efficiency of mRNA splicing and is required for sex determination. In the heterodimer formed with Ime4/Mettl3, Mettl14 constitutes the RNA-binding scaffold that recognizes the substrate rather than the catalytic core. Required for sex determination and dosage compensation via Sxl alternative splicing: m6A methylation acts as a key regulator of Sxl pre-mRNA and promotes female-specific alternative splicing of Sxl, which determines female physiognomy. M6A methylation is also required for neuronal functions. The polypeptide is N(6)-adenosine-methyltransferase non-catalytic subunit METTL14 (Drosophila melanogaster (Fruit fly)).